Here is a 428-residue protein sequence, read N- to C-terminus: Endoplasmic reticulum junction formation protein lunapark (428 aa).

Gly2 is lipidated: N-myristoyl glycine. Over 2 to 45 the chain is Cytoplasmic; that stretch reads GGLFSRWRTKLSTVEVLESIDKEIQALEEFREKNQRLQKLRVGR. Residues 16 to 43 adopt a coiled-coil conformation; sequence EVLESIDKEIQALEEFREKNQRLQKLRV. A helical transmembrane segment spans residues 46-66; it reads LILYSSVLYLFTCLIVYLWYL. At 67-77 the chain is on the lumenal side; it reads PDEFTARLAMT. The helical transmembrane segment at 78-98 threads the bilayer; it reads LPFFAFPLIIWSIRTVIIFFF. The Cytoplasmic segment spans residues 99-428; sequence SKRTERNNEA…ELNGESLTAE (330 aa). A coiled-coil region spans residues 102–128; sequence TERNNEALDDLKSQRKKILEEVMEKET. 5 positions are modified to phosphoserine: Ser114, Ser153, Ser177, Ser182, and Ser194. Positions 143 to 248 are disordered; that stretch reads SKKAKECEPP…PPGPPLARPI (106 aa). A compositionally biased stretch (pro residues) spans 185–198; sequence QGPPPQVPVSPGPP. Residues Thr211 and Thr213 each carry the phosphothreonine modification. 2 positions are modified to phosphoserine: Ser217 and Ser227. Residues 276–301 form a C4-type; plays a role in ER morphology zinc finger; the sequence is CQQCFSHNGMALKEEFEYIAFRCAYC. 3 positions are modified to phosphoserine: Ser321, Ser353, and Ser384. Residues 361–428 form a disordered region; the sequence is NNTEQTDDKI…ELNGESLTAE (68 aa). Acidic residues predominate over residues 386 to 401; sequence SEEPEEKQETENEEAS. Ser414 carries the phosphoserine modification.

The protein belongs to the lunapark family. As to quaternary structure, homodimer; homodimerization requires the C4-type zinc finger motif and decreases during mitosis in a phosphorylation-dependent manner. Post-translationally, myristoylated; myristoylation is necessary for the endoplasmic reticulum (ER) three-way ER tubular junction formation, but is not required neither for membrane translocation, membrane topology formation, nor for the specific localization to ER membranes. Phosphorylated. Phosphorylation occurs at Ser-177, Ser-182, Ser-217, Ser-227, Ser-321 and Ser-384 during interphase. Phosphorylation occurs at Ser-114, Ser-153, Ser-194, Thr-211 and Ser-353 during mitosis; these phosphorylations reduce both its homodimerization and the ER three-way tubular junction formation. In terms of processing, subject to proteasomal degradation following phosphorylation during mitosis.

It localises to the endoplasmic reticulum membrane. Its function is as follows. Endoplasmic reticulum (ER)-shaping membrane protein that plays a role in determining ER morphology. Involved in the stabilization of nascent three-way ER tubular junctions within the ER network. May also play a role as a curvature-stabilizing protein within three-way ER tubular junction network. May be involved in limb and central nervous system development. The polypeptide is Endoplasmic reticulum junction formation protein lunapark (Pongo abelii (Sumatran orangutan)).